Here is a 423-residue protein sequence, read N- to C-terminus: Probable serine/threonine-protein kinase PBL5 (423 aa).

The segment at 1-66 is disordered; that stretch reads MGCFGCSKKS…DVNNEGGVGK (66 aa). Residue G2 is the site of N-myristoyl glycine attachment. C3 is lipidated: S-palmitoyl cysteine. The span at 12–22 shows a compositional bias: basic and acidic residues; it reads KRSETNKDTVI. Over residues 43 to 52 the composition is skewed to polar residues; that stretch reads TQPSSDSTKV. The residue at position 92 (T92) is a Phosphothreonine. Positions 103–380 constitute a Protein kinase domain; it reads FRSDCFLGEG…SDVVLALNFL (278 aa). ATP-binding positions include 109-117 and K132; that span reads LGEGGFGKV. The residue at position 177 (Y177) is a Phosphotyrosine. D230 acts as the Proton acceptor in catalysis. S234 and S264 each carry phosphoserine. Residues T265 and T270 each carry the phosphothreonine modification. Residue Y278 is modified to Phosphotyrosine. Residues 383–398 are compositionally biased toward low complexity; sequence SKYDPNSPSSSSGKNP. The disordered stretch occupies residues 383-423; that stretch reads SKYDPNSPSSSSGKNPSFHRDRDDEEKRPHLVKETECEGSS. Residues 400–423 are compositionally biased toward basic and acidic residues; sequence FHRDRDDEEKRPHLVKETECEGSS.

Belongs to the protein kinase superfamily. Ser/Thr protein kinase family. In terms of processing, palmitoylation at Cys-3 and Cys-6 are required for plasma membrane location.

It localises to the cell membrane. The catalysed reaction is L-seryl-[protein] + ATP = O-phospho-L-seryl-[protein] + ADP + H(+). It carries out the reaction L-threonyl-[protein] + ATP = O-phospho-L-threonyl-[protein] + ADP + H(+). Functionally, may be involved in plant defense signaling. The polypeptide is Probable serine/threonine-protein kinase PBL5 (Arabidopsis thaliana (Mouse-ear cress)).